The following is a 185-amino-acid chain: MKVIVINSTPINPIVIGRIKGAYGILGWVKILSFTEKIEDIFVYNPWFIFFRSKWKVIKLEYWRLMNNKNYIVKFFNVSDRNHAMALSQHNLVVESIQFPKLYNKDEYYWKDIIGCKIMTINGKCLGRVISIIDTKAHDILVVRSEEYGFTKYVDCLIPFILKKIIKDVDLIKNIVVVDWEIYKF.

The PRC barrel domain maps to 105-184; it reads KDEYYWKDII…IVVVDWEIYK (80 aa).

It belongs to the RimM family. Binds ribosomal protein uS19.

The protein localises to the cytoplasm. An accessory protein needed during the final step in the assembly of 30S ribosomal subunit, possibly for assembly of the head region. Essential for efficient processing of 16S rRNA. May be needed both before and after RbfA during the maturation of 16S rRNA. It has affinity for free ribosomal 30S subunits but not for 70S ribosomes. This chain is Ribosome maturation factor RimM, found in Blochmanniella floridana.